The following is a 554-amino-acid chain: Formate--tetrahydrofolate ligase (554 aa).

64-71 serves as a coordination point for ATP; that stretch reads TPAGEGKS.

The protein belongs to the formate--tetrahydrofolate ligase family.

It carries out the reaction (6S)-5,6,7,8-tetrahydrofolate + formate + ATP = (6R)-10-formyltetrahydrofolate + ADP + phosphate. It participates in one-carbon metabolism; tetrahydrofolate interconversion. This is Formate--tetrahydrofolate ligase from Leuconostoc citreum (strain KM20).